We begin with the raw amino-acid sequence, 1237 residues long: Anion exchange protein 2 (1237 aa).

Positions 1-237 are disordered; sequence MSSAPRRPAS…SYNLQERRRI (237 aa). Topologically, residues 1–703 are cytoplasmic; it reads MSSAPRRPAS…SDFRDALDPQ (703 aa). Basic and acidic residues-rich tracts occupy residues 37-49 and 58-75; these read ELHRTLGVERFEE and GGEEPGRSYGEEDFEYHR. Basic residues-rich tracts occupy residues 76–85 and 94–110; these read QSSHHIHHPL and RRRKTPQGPGRKPRRRP. A Phosphoserine modification is found at Ser113. Acidic residues predominate over residues 122 to 133; sequence EEGEEDEEEANE. The span at 137–151 shows a compositional bias: low complexity; it reads ARAPTEPSPASTPSS. 3 positions are modified to phosphoserine: Ser144, Ser170, and Ser172. Residues 206–215 are compositionally biased toward gly residues; sequence TAGGDNGGAS. Ser239 bears the Phosphoserine mark. Phosphothreonine is present on Thr253. N6-methyllysine is present on Lys270. A disordered region spans residues 281–316; sequence RRHLVRKNAKGSAQSSREGREPGPTPRSRPRAPHKP. Ser439 is subject to Phosphoserine. Residues 445–464 are disordered; the sequence is SLLGHHHGQGAESDPHVTEP. Helical transmembrane passes span 704 to 727, 733 to 770, 790 to 812, and 822 to 843; these read CVAAVIFIYFAALSPAITFGGLLG, LIGVSELIMSTALQGVIFCLLGAQPLLVIGFSGPLLVF, VWIGFWLVLLALLMVALEGSFLV, and IFAFLISLIFIYETFYKLIKIF. The tract at residues 704 to 1237 is membrane (anion exchange); the sequence is CVAAVIFIYF…DEYNEMPMPV (534 aa). The Extracellular segment spans residues 844–896; the sequence is QEHPLHGCSVSNSSETDSSENATWAGAGSTLGPANRSSAGQAGQGRPRGQPNT. Residues Asn855, Asn864, and Asn878 are each glycosylated (N-linked (GlcNAc...) asparagine). A helical transmembrane segment spans residues 897 to 914; the sequence is ALLSLVLMAGTFFIAFFL. Over 915 to 929 the chain is Cytoplasmic; that stretch reads RKFKNSRFFPGRIRR. Transmembrane regions (helical) follow at residues 930-950, 984-1006, 1032-1053, 1087-1132, and 1159-1195; these read VIGDFGVPIAILIMVLVDYSI, PFPVWMMVASLLPAILVFILIFM, LLLIVAMGGICALFGLPWLAAA, VTGL…IQFY, and MHLFTALQLLCLALLWAVMSTAASLAFPFILILTVPL. Cys1169 is lipidated: S-palmitoyl cysteine.

It belongs to the anion exchanger (TC 2.A.31) family. Expressed in the ileum (at protein level).

It localises to the cell membrane. The protein localises to the apical cell membrane. It is found in the basolateral cell membrane. The catalysed reaction is hydrogencarbonate(in) + chloride(out) = hydrogencarbonate(out) + chloride(in). Functionally, sodium-independent anion exchanger which mediates the electroneutral exchange of chloride for bicarbonate ions across the cell membrane. Plays an important role in osteoclast differentiation and function. Regulates bone resorption and calpain-dependent actin cytoskeleton organization in osteoclasts via anion exchange-dependent control of pH. Essential for intracellular pH regulation in CD8(+) T-cells upon CD3 stimulation, modulating CD8(+) T-cell response. In Oryctolagus cuniculus (Rabbit), this protein is Anion exchange protein 2 (SLC4A2).